Here is a 191-residue protein sequence, read N- to C-terminus: Shikimate kinase (191 aa).

24 to 29 serves as a coordination point for ATP; that stretch reads GSGKTS. Thr-28 contacts Mg(2+). Residues Asp-46, Arg-70, and Gly-92 each contribute to the substrate site. Arg-130 contributes to the ATP binding site. Arg-149 contributes to the substrate binding site.

Belongs to the shikimate kinase family. As to quaternary structure, monomer. It depends on Mg(2+) as a cofactor.

It is found in the cytoplasm. The catalysed reaction is shikimate + ATP = 3-phosphoshikimate + ADP + H(+). It participates in metabolic intermediate biosynthesis; chorismate biosynthesis; chorismate from D-erythrose 4-phosphate and phosphoenolpyruvate: step 5/7. Functionally, catalyzes the specific phosphorylation of the 3-hydroxyl group of shikimic acid using ATP as a cosubstrate. The protein is Shikimate kinase of Parasynechococcus marenigrum (strain WH8102).